The following is a 98-amino-acid chain: DNA-binding protein Fis (98 aa).

The H-T-H motif DNA-binding region spans 74–93 (QTRAALMMGINRGTLRKKLK).

It belongs to the transcriptional regulatory Fis family. As to quaternary structure, homodimer.

In terms of biological role, activates ribosomal RNA transcription. Plays a direct role in upstream activation of rRNA promoters. In Citrobacter koseri (strain ATCC BAA-895 / CDC 4225-83 / SGSC4696), this protein is DNA-binding protein Fis.